The chain runs to 331 residues: Biotin synthase (331 aa).

A Radical SAM core domain is found at 39-264 (SELQTCYLIS…VFPRSMVRLA (226 aa)). Cysteine 54, cysteine 58, and cysteine 61 together coordinate [4Fe-4S] cluster. 4 residues coordinate [2Fe-2S] cluster: cysteine 98, cysteine 130, cysteine 190, and arginine 262.

It belongs to the radical SAM superfamily. Biotin synthase family. As to quaternary structure, homodimer. Requires [4Fe-4S] cluster as cofactor. [2Fe-2S] cluster is required as a cofactor.

It carries out the reaction (4R,5S)-dethiobiotin + (sulfur carrier)-SH + 2 reduced [2Fe-2S]-[ferredoxin] + 2 S-adenosyl-L-methionine = (sulfur carrier)-H + biotin + 2 5'-deoxyadenosine + 2 L-methionine + 2 oxidized [2Fe-2S]-[ferredoxin]. It functions in the pathway cofactor biosynthesis; biotin biosynthesis; biotin from 7,8-diaminononanoate: step 2/2. Its function is as follows. Catalyzes the conversion of dethiobiotin (DTB) to biotin by the insertion of a sulfur atom into dethiobiotin via a radical-based mechanism. This is Biotin synthase from Chlamydia pneumoniae (Chlamydophila pneumoniae).